The chain runs to 804 residues: G-type lectin S-receptor-like serine/threonine-protein kinase LECRK4 (804 aa).

Positions 1 to 23 are cleaved as a signal peptide; the sequence is MAPPLFLLSLQLLVLLSSPSAQA. A Bulb-type lectin domain is found at 24–150; sequence QNISLGTSLT…GGSTISWETF (127 aa). Residues 24–458 lie on the Extracellular side of the membrane; the sequence is QNISLGTSLT…DKKLWILGSS (435 aa). 6 N-linked (GlcNAc...) asparagine glycosylation sites follow: Asn-25, Asn-58, Asn-216, Asn-227, Asn-238, and Asn-243. An EGF-like; atypical domain is found at 290–341; that stretch reads PENICNAQTKVGSGTCGFNSYCMFDGSNNQTSCVCPEQYSFFDEVRKYRGCR. 5 disulfide bridges follow: Cys-294–Cys-311, Cys-305–Cys-322, Cys-324–Cys-340, Cys-386–Cys-406, and Cys-390–Cys-396. N-linked (GlcNAc...) asparagine glycosylation is present at Asn-318. One can recognise a PAN domain in the interval 349 to 426; the sequence is CDLDEAASMA…IMGSGVQRTV (78 aa). N-linked (GlcNAc...) asparagine glycosylation occurs at Asn-434. The chain crosses the membrane as a helical span at residues 459 to 479; sequence LLLGGSVIANFALSSVLLFGT. Over 480–804 the chain is Cytoplasmic; the sequence is YCTITRKDVQ…DSSSVVNSFP (325 aa). A Protein kinase domain is found at 514–790; the sequence is DGFKEVLGTG…TQMLDGADAI (277 aa). Residues 520–528 and Lys-544 each bind ATP; that span reads LGTGASGIV. Asp-638 (proton acceptor) is an active-site residue.

The protein belongs to the protein kinase superfamily. Ser/Thr protein kinase family.

The protein resides in the membrane. It catalyses the reaction L-seryl-[protein] + ATP = O-phospho-L-seryl-[protein] + ADP + H(+). The catalysed reaction is L-threonyl-[protein] + ATP = O-phospho-L-threonyl-[protein] + ADP + H(+). Does not seem to be involved in resistance against the herbivorous insect brown planthopper (N.lugens, BPH). This chain is G-type lectin S-receptor-like serine/threonine-protein kinase LECRK4, found in Oryza sativa subsp. indica (Rice).